A 257-amino-acid chain; its full sequence is Imidazole glycerol phosphate synthase subunit HisF (257 aa).

Catalysis depends on residues aspartate 12 and aspartate 131.

The protein belongs to the HisA/HisF family. In terms of assembly, heterodimer of HisH and HisF.

It localises to the cytoplasm. It carries out the reaction 5-[(5-phospho-1-deoxy-D-ribulos-1-ylimino)methylamino]-1-(5-phospho-beta-D-ribosyl)imidazole-4-carboxamide + L-glutamine = D-erythro-1-(imidazol-4-yl)glycerol 3-phosphate + 5-amino-1-(5-phospho-beta-D-ribosyl)imidazole-4-carboxamide + L-glutamate + H(+). It participates in amino-acid biosynthesis; L-histidine biosynthesis; L-histidine from 5-phospho-alpha-D-ribose 1-diphosphate: step 5/9. Its function is as follows. IGPS catalyzes the conversion of PRFAR and glutamine to IGP, AICAR and glutamate. The HisF subunit catalyzes the cyclization activity that produces IGP and AICAR from PRFAR using the ammonia provided by the HisH subunit. This chain is Imidazole glycerol phosphate synthase subunit HisF, found in Burkholderia ambifaria (strain MC40-6).